Consider the following 962-residue polypeptide: Oncostatin-M-specific receptor subunit beta (962 aa).

The first 28 residues, 1-28, serve as a signal peptide directing secretion; it reads MAFSVVLHQVTFLLAVLSLRTSQSKVLG. Over 29 to 738 the chain is Extracellular; it reads EPLQLTPEIH…VTTPDVRSHM (710 aa). N-linked (GlcNAc...) asparagine glycosylation occurs at asparagine 219. 5 consecutive Fibronectin type-III domains span residues 237-332, 333-426, 428-527, 528-621, and 623-734; these read EPKN…VHPK, APHD…TPEA, PSEA…SGHE, EVHE…TQEL, and PSVN…TPDV. Cysteine 243 and cysteine 253 are joined by a disulfide. Residue asparagine 324 is glycosylated (N-linked (GlcNAc...) asparagine). The WSXWS motif motif lies at 413-417; it reads WSDWM. Residues asparagine 492, asparagine 578, and asparagine 723 are each glycosylated (N-linked (GlcNAc...) asparagine). Residues 739-759 form a helical membrane-spanning segment; that stretch reads LLQIILPMTLGVFLSIIVCYW. The Cytoplasmic segment spans residues 760-962; sequence KSQWVKEKCY…ASLKENNLTS (203 aa). A Box 1 motif motif is present at residues 768 to 776; that stretch reads CYPDIPNPY. The tract at residues 818 to 840 is disordered; it reads VGSGKLHTEDVPTKPPLVPTEKD.

Belongs to the type I cytokine receptor family. Type 2 subfamily. As to quaternary structure, heterodimer composed of OSMR and IL6ST (type II OSM receptor). Heterodimer with IL31RA to form the IL31 receptor. In terms of tissue distribution, widely expressed. Expressed at high levels in the liver, skin and spleen. In the liver it is expressed exclusively in the oval cells.

The protein resides in the membrane. Its function is as follows. Associates with IL31RA to form the IL31 receptor. Binds IL31 and activates STAT1, STAT3 and STAT5. Capable of transducing OSM-specific signaling events. The OSM/OSM-R system is pivotal in the differentiation of oval cells into hepatocytes, thereby promoting liver regeneration. In Rattus norvegicus (Rat), this protein is Oncostatin-M-specific receptor subunit beta (Osmr).